An 813-amino-acid polypeptide reads, in one-letter code: MGLPGSIVFLIMIHAFCAKKTPTNTLPSLLSLLGITDLPSLRLNILSLDGSANNQGSWVRDNTTFVYIGASSPANGVLFYMPTSHVQQMTFYKRPVSKLLASNNLIKFLNTGSYINHSFMTAMPPYRRNVQIPSDRSGLKLDDKDDAQPTGTNPPTELKNLKPIDVVNPEHRFILTSELTGTYVKHVCFVDPMDMLIPVDYAHIRTIIFGSDGAEVIMKIGITFASITISMKSAPPVELILSERARNISLIWPALKPYEPVDKFTRRPYLIYLLGPHMNASDMEIKSYINMIESVEESSNYDFQIAQTHAQLFIFAATPISDINDIYCFRVVTTRLFMSLVASVRNAFQSGYISFDEIIKTEANIKMITETLSTFALHSNPGTYFLLSGMHLRNENADIIKSLIRKTIINASKNTASLSILQHLYVLRSAYAFNISQESGNLGEHVSSISLELIIALHEESVRDTIAWNTSARHALYYAFASIFQRPPNEWDASRTARKALLFASSMCTEEHIVATELVIQEMYIKINVKNSPVHILDVYTPCVTALRMDISEHHHRLYAMSDVILHPVIEKYLENDSRGIDAEEELETKAELVITKLKTPLMRRLTIYASEVVTCSDADILEATALLVLPISGLGSYVVTRQLGIRGIVYNVDGVDVNNQLYITYVRLPCTTTAGNIVPMVLPRPLGSDCPYCGCVLLRYSTNGNLRHTIYISSQDLQRELIAGGNSSIRYFNPTIAQIYGTSLLLYPNGTIVRILAFESERVTIISATYVATATAGASIAISIAIITVRMRINNFRYNYHRYKKLSLYDDL.

The N-terminal stretch at 1-18 (MGLPGSIVFLIMIHAFCA) is a signal peptide. Residues 19–769 (KKTPTNTLPS…ESERVTIISA (751 aa)) are Virion surface-facing. N-linked (GlcNAc...) asparagine; by host glycosylation is found at Asn62 and Asn116. Positions 135–159 (DRSGLKLDDKDDAQPTGTNPPTELK) are disordered. Residues 137–147 (SGLKLDDKDDA) show a composition bias toward basic and acidic residues. The interval 212–273 (DGAEVIMKIG…FTRRPYLIYL (62 aa)) is interaction with gL. 8 N-linked (GlcNAc...) asparagine; by host glycosylation sites follow: Asn247, Asn279, Asn410, Asn434, Asn469, Asn576, Asn727, and Asn750. The chain crosses the membrane as a helical span at residues 770 to 790 (TYVATATAGASIAISIAIITV). Topologically, residues 791–813 (RMRINNFRYNYHRYKKLSLYDDL) are intravirion.

It belongs to the herpesviridae glycoprotein H family. In terms of assembly, interacts with glycoprotein L (gL); this interaction is necessary for the correct processing and cell surface expression of gH. The heterodimer gH/gL seems to interact with gB trimers during fusion. Post-translationally, N-glycosylated, O-glycosylated, and sialylated.

Its subcellular location is the virion membrane. The protein resides in the host cell membrane. The protein localises to the host endosome membrane. In terms of biological role, the heterodimer glycoprotein H-glycoprotein L is required for the fusion of viral and plasma membranes leading to virus entry into the host cell. Following initial binding to host receptor, membrane fusion is mediated by the fusion machinery composed of gB and the heterodimer gH/gL. May also be involved in the fusion between the virion envelope and the outer nuclear membrane during virion morphogenesis. In Gallid herpesvirus 2 (strain RB-1b) (GaHV-2), this protein is Envelope glycoprotein H.